The sequence spans 146 residues: UPF0178 protein OB0454 (146 aa).

It belongs to the UPF0178 family.

The sequence is that of UPF0178 protein OB0454 from Oceanobacillus iheyensis (strain DSM 14371 / CIP 107618 / JCM 11309 / KCTC 3954 / HTE831).